The primary structure comprises 229 residues: MIPLQKDNQEEGVCPICQESLKEAVSTNCGHLFCRVCLTQHVEKASASGVFCCPLCRKPCSEEVLGTGYICPNHQKRVCRFCEESRLLLCVECLVSPEHMSHHELTIENALSHYKERLNRRSRKLRKDIAELQRLKAQQEKKLQALQQWLGQLEHMPAEAARILDISRAVTQLSSLVIDLERTAKELDTNTLKNAGDLLNRSAPQKLEVIYPQLEKGVSELLLQPPQKL.

The segment at 14–57 (CPICQESLKEAVSTNCGHLFCRVCLTQHVEKASASGVFCCPLCR) adopts an RING-type zinc-finger fold. A B box-type zinc finger spans residues 66–107 (GTGYICPNHQKRVCRFCEESRLLLCVECLVSPEHMSHHELTI). Zn(2+) contacts are provided by Cys-71, His-74, Cys-93, and His-99. Residues 107–154 (IENALSHYKERLNRRSRKLRKDIAELQRLKAQQEKKLQALQQWLGQLE) adopt a coiled-coil conformation.

This sequence belongs to the TRIM/RBCC family. In terms of assembly, interacts with NEDD8.

It carries out the reaction S-ubiquitinyl-[E2 ubiquitin-conjugating enzyme]-L-cysteine + [acceptor protein]-L-lysine = [E2 ubiquitin-conjugating enzyme]-L-cysteine + N(6)-ubiquitinyl-[acceptor protein]-L-lysine.. Its function is as follows. E3 ubiquitin-protein ligase that plays a role in the limitation of the innate immune response. Mediates inhibition of the RLR signaling pathway by ubiquitinating RIGI and IFIH1 receptors, leading to their proteasomal degradation. Also promotes the neddylation of IKBKG/NEMO, stabilizing NFKBIA, and thereby inhibiting of NF-kappa-B nuclear translocation and activation. This Pan troglodytes (Chimpanzee) protein is E3 ubiquitin ligase TRIM40 (TRIM40).